Consider the following 294-residue polypeptide: Beta-glucoside kinase (294 aa).

5-11 (AFDIGGT) contributes to the ATP binding site.

It belongs to the ROK (NagC/XylR) family.

It catalyses the reaction D-cellobiose + ATP = 6-phospho-beta-D-glucosyl-(1-&gt;4)-D-glucose + ADP + H(+). Catalyzes the ATP-dependent phosphorylation of cellobiose to produce cellobiose-6'-P. May have a dual role of kinase and transcriptional regulator of the cellobiose-PTS operon. This Listeria monocytogenes serovar 1/2a (strain ATCC BAA-679 / EGD-e) protein is Beta-glucoside kinase (bglK).